Reading from the N-terminus, the 316-residue chain is Ferrochelatase (316 aa).

Residues His-188 and Glu-269 each coordinate Fe cation.

This sequence belongs to the ferrochelatase family.

It localises to the cytoplasm. The catalysed reaction is heme b + 2 H(+) = protoporphyrin IX + Fe(2+). Its pathway is porphyrin-containing compound metabolism; protoheme biosynthesis; protoheme from protoporphyrin-IX: step 1/1. Functionally, catalyzes the ferrous insertion into protoporphyrin IX. This is Ferrochelatase from Wolinella succinogenes (strain ATCC 29543 / DSM 1740 / CCUG 13145 / JCM 31913 / LMG 7466 / NCTC 11488 / FDC 602W) (Vibrio succinogenes).